Consider the following 333-residue polypeptide: Acetoin:2,6-dichlorophenolindophenol oxidoreductase subunit alpha (333 aa).

In terms of assembly, tetramer of 2 alpha and 2 beta subunits. It depends on thiamine diphosphate as a cofactor.

Its pathway is ketone degradation; acetoin degradation. Its function is as follows. Catalyzes the 2,6-dichlorophenolindophenol-dependent cleavage of acetoin into acetate and acetaldehyde, in vitro. The alpha subunit is probably the catalytic subunit of the enzyme. The protein is Acetoin:2,6-dichlorophenolindophenol oxidoreductase subunit alpha (acoA) of Cupriavidus necator (strain ATCC 17699 / DSM 428 / KCTC 22496 / NCIMB 10442 / H16 / Stanier 337) (Ralstonia eutropha).